Consider the following 157-residue polypeptide: Rieske domain-containing protein (157 aa).

Methionine 1 bears the N-acetylmethionine mark. Serine 6 bears the Phosphoserine mark. 2 Rieske domains span residues 16 to 127 and 17 to 131; these read TSVC…VDNG and SVCV…NIYV. [2Fe-2S] cluster contacts are provided by cysteine 57, histidine 59, cysteine 80, and histidine 83.

The cofactor is [2Fe-2S] cluster.

This Mus musculus (Mouse) protein is Rieske domain-containing protein (Rfesd).